The primary structure comprises 534 residues: O-phosphoserine--tRNA(Cys) ligase (534 aa).

Residues 186–188 (HMT), 231–233 (SAS), 273–274 (YY), and N325 each bind substrate.

It belongs to the class-II aminoacyl-tRNA synthetase family. O-phosphoseryl-tRNA(Cys) synthetase subfamily. In terms of assembly, homotetramer. Interacts with SepCysS.

It catalyses the reaction tRNA(Cys) + O-phospho-L-serine + ATP = O-phospho-L-seryl-tRNA(Cys) + AMP + diphosphate. Its function is as follows. Catalyzes the attachment of O-phosphoserine (Sep) to tRNA(Cys). The sequence is that of O-phosphoserine--tRNA(Cys) ligase (sepS) from Archaeoglobus fulgidus (strain ATCC 49558 / DSM 4304 / JCM 9628 / NBRC 100126 / VC-16).